A 182-amino-acid chain; its full sequence is CASP-like protein 5B1 (182 aa).

The disordered stretch occupies residues 1–20 (GDASHAVDHPIGGHPEHEHD). Residues 1–41 (GDASHAVDHPIGGHPEHEHDLREEEGPLIFPMKDLPGTPGT) are Cytoplasmic-facing. A helical transmembrane segment spans residues 42–62 (VGGLALRMGQFIFAAASVVIM). Residues 63 to 73 (VTSDEFINFTA) lie on the Extracellular side of the membrane. N-linked (GlcNAc...) asparagine glycosylation is present at asparagine 70. A helical transmembrane segment spans residues 74-94 (FCYLAAAMALQFLWSFVLATI). Over 95-108 (DVYALLIKRGLPNS) the chain is Cytoplasmic. The helical transmembrane segment at 109-129 (ILLSLFVVGDWVTATLSLAAA) threads the bilayer. Topologically, residues 130 to 159 (CSTAGITVLFDKDLNYCDQMHCRRYQLSAT) are extracellular. A helical membrane pass occupies residues 160 to 180 (MAFFSWVLIAISSLITLLLLV). The Cytoplasmic segment spans residues 181–182 (SE).

Belongs to the Casparian strip membrane proteins (CASP) family. As to quaternary structure, homodimer and heterodimers.

It is found in the cell membrane. The sequence is that of CASP-like protein 5B1 from Picea sitchensis (Sitka spruce).